The primary structure comprises 114 residues: UPF0102 protein Shew_0226 (114 aa).

This sequence belongs to the UPF0102 family.

The polypeptide is UPF0102 protein Shew_0226 (Shewanella loihica (strain ATCC BAA-1088 / PV-4)).